The sequence spans 83 residues: Delta-conotoxin-like Ac6.2 (83 aa).

The N-terminal stretch at 1 to 22 is a signal peptide; that stretch reads MKLTCVVIVAVLFLTAWTFVTA. Residues 23-51 constitute a propeptide that is removed on maturation; the sequence is DDSRYGLKNLFPKARHEMKNPEASKLNKR. 3 disulfides stabilise this stretch: Cys54–Cys69, Cys61–Cys73, and Cys68–Cys78. A 4-hydroxyproline mark is found at Pro57 and Pro65.

It belongs to the conotoxin O1 superfamily. In terms of tissue distribution, expressed by the venom duct.

Its subcellular location is the secreted. Delta-conotoxins bind to site 6 of voltage-gated sodium channels (Nav) and inhibit the inactivation process. The polypeptide is Delta-conotoxin-like Ac6.2 (Conus achatinus (Little frog cone)).